We begin with the raw amino-acid sequence, 76 residues long: Conotoxin ArMLCL-022 (76 aa).

The signal sequence occupies residues 1–19 (MLCLPVFIILLLLASTAAS). The propeptide occupies 20–52 (NPLETRIQSDLIRAALEDADMKTERGFLGVLMK).

It belongs to the conotoxin T superfamily. Expressed by the venom duct.

It localises to the secreted. The chain is Conotoxin ArMLCL-022 from Conus arenatus (Sand-dusted cone).